A 255-amino-acid chain; its full sequence is Formate hydrogenlyase subunit 7 (255 aa).

Residues C45, C51, C115, and C145 each coordinate [4Fe-4S] cluster.

It belongs to the complex I 20 kDa subunit family. In terms of assembly, FHL comprises of a formate dehydrogenase, unidentified electron carriers and a hydrogenase (isoenzyme 3). In this non-energy conserving pathway molecular hydrogen and carbodioxide from formate are released. It depends on [4Fe-4S] cluster as a cofactor.

This is Formate hydrogenlyase subunit 7 (hycG) from Escherichia coli (strain K12).